Reading from the N-terminus, the 266-residue chain is Translation initiation factor 2 subunit alpha (266 aa).

The 72-residue stretch at 12–83 (GEILIATVKQ…RKGTVDVSLK (72 aa)) folds into the S1 motif domain.

The protein belongs to the eIF-2-alpha family. As to quaternary structure, heterotrimer composed of an alpha, a beta and a gamma chain.

In terms of biological role, eIF-2 functions in the early steps of protein synthesis by forming a ternary complex with GTP and initiator tRNA. This Saccharolobus islandicus (strain Y.N.15.51 / Yellowstone #2) (Sulfolobus islandicus) protein is Translation initiation factor 2 subunit alpha.